Here is a 1331-residue protein sequence, read N- to C-terminus: ABC multidrug transporter MDR2 (1331 aa).

Basic and acidic residues-rich tracts occupy residues 1–20 and 31–41; these read MVEV…KQEN and SDKEKVAKKGN. The tract at residues 1-51 is disordered; the sequence is MVEVSEKPNTQDDGVSKQENRNPASSSSSTSDKEKVAKKGNSDATKSSTPE. The next 4 membrane-spanning stretches (helical) occupy residues 93–113, 147–167, 219–239, and 242–262; these read MIFL…LPLF, YFVY…VGFI, KVGL…IGYV, and WKLA…MGGI. Residues 97–387 form the ABC transmembrane type-1 1 domain; sequence AIVSLASIAA…VAPNTQAFAS (291 aa). The N-linked (GlcNAc...) asparagine glycan is linked to Asn-293. 2 consecutive transmembrane segments (helical) span residues 325–345 and 358–378; these read LGIM…LGFW and LSAI…IGNV. The ABC transporter 1 domain occupies 422–667; sequence IEFRGIKHIY…KGTYLQLVEA (246 aa). 457 to 464 lines the ATP pocket; that stretch reads GPSGSGKS. A glycan (N-linked (GlcNAc...) asparagine) is linked at Asn-529. The next 2 membrane-spanning stretches (helical) occupy residues 762 to 782 and 810 to 830; these read LCGF…SVFF and FLML…IFAI. The 288-residue stretch at 764-1051 folds into the ABC transmembrane type-1 2 domain; it reads GFFFAVLSGA…VFSFSPDMGK (288 aa). Asn-860 carries N-linked (GlcNAc...) asparagine glycosylation. The next 4 membrane-spanning stretches (helical) occupy residues 884 to 904, 910 to 930, 995 to 1015, and 1025 to 1045; these read LGTI…ALAF, LVCI…FWIL, ASQS…GGLL, and FFLC…VFSF. An ABC transporter 2 domain is found at 1086–1324; sequence IEFRDVHFRY…KGRYYELVHM (239 aa). An N-linked (GlcNAc...) asparagine glycan is attached at Asn-1108. 1121 to 1128 is a binding site for ATP; that stretch reads GPSGCGKS.

This sequence belongs to the ABC transporter superfamily. ABCB family. Multidrug resistance exporter (TC 3.A.1.201) subfamily.

It is found in the cell membrane. The catalysed reaction is itraconazole(in) + ATP + H2O = itraconazole(out) + ADP + phosphate + H(+). Functionally, pleiotropic ABC efflux transporter that may be involved in the modulation susceptibility to a wide range of unrelated cytotoxic compounds, including terbinafine, 4-nitroquinoline N-oxide, and ethidium bromide. May play a role in pathogenicity. The chain is ABC multidrug transporter MDR2 from Trichophyton interdigitale (strain MR816).